The primary structure comprises 210 residues: Large ribosomal subunit protein bL25 (210 aa).

The tract at residues 175–210 (IATILPPQQEEEIDSGEQQEAGQPDAAEGRETTPEE) is disordered. A compositionally biased stretch (basic and acidic residues) spans 201–210 (AEGRETTPEE).

It belongs to the bacterial ribosomal protein bL25 family. CTC subfamily. As to quaternary structure, part of the 50S ribosomal subunit; part of the 5S rRNA/L5/L18/L25 subcomplex. Contacts the 5S rRNA. Binds to the 5S rRNA independently of L5 and L18.

Its function is as follows. This is one of the proteins that binds to the 5S RNA in the ribosome where it forms part of the central protuberance. The polypeptide is Large ribosomal subunit protein bL25 (Geobacillus kaustophilus (strain HTA426)).